The following is a 158-amino-acid chain: Transcription elongation factor GreA (158 aa).

Residues 53 to 73 adopt a coiled-coil conformation; that stretch reads EQQGFIEGRIKEIEAKLSNAQ.

Belongs to the GreA/GreB family.

Functionally, necessary for efficient RNA polymerase transcription elongation past template-encoded arresting sites. The arresting sites in DNA have the property of trapping a certain fraction of elongating RNA polymerases that pass through, resulting in locked ternary complexes. Cleavage of the nascent transcript by cleavage factors such as GreA or GreB allows the resumption of elongation from the new 3'terminus. GreA releases sequences of 2 to 3 nucleotides. The chain is Transcription elongation factor GreA from Thioalkalivibrio sulfidiphilus (strain HL-EbGR7).